The sequence spans 216 residues: Serine acetyltransferase (216 aa).

Belongs to the transferase hexapeptide repeat family.

The protein resides in the cytoplasm. It catalyses the reaction L-serine + acetyl-CoA = O-acetyl-L-serine + CoA. It functions in the pathway amino-acid biosynthesis; L-cysteine biosynthesis; L-cysteine from L-serine: step 1/2. Inhibited by cysteine. In terms of biological role, catalyzes the acetylation of serine by acetyl-CoA to produce O-acetylserine (OAS). The sequence is that of Serine acetyltransferase from Bacillus licheniformis (strain ATCC 14580 / DSM 13 / JCM 2505 / CCUG 7422 / NBRC 12200 / NCIMB 9375 / NCTC 10341 / NRRL NRS-1264 / Gibson 46).